A 330-amino-acid chain; its full sequence is Malate dehydrogenase (330 aa).

Residue 13–19 (GAAGQIG) participates in NAD(+) binding. 2 residues coordinate substrate: arginine 94 and arginine 100. NAD(+) is bound by residues asparagine 107, glutamine 114, and 131–133 (VGN). The substrate site is built by asparagine 133 and arginine 164. The Proton acceptor role is filled by histidine 189.

This sequence belongs to the LDH/MDH superfamily. MDH type 2 family.

The catalysed reaction is (S)-malate + NAD(+) = oxaloacetate + NADH + H(+). Its function is as follows. Catalyzes the reversible oxidation of malate to oxaloacetate. The protein is Malate dehydrogenase of Deinococcus radiodurans (strain ATCC 13939 / DSM 20539 / JCM 16871 / CCUG 27074 / LMG 4051 / NBRC 15346 / NCIMB 9279 / VKM B-1422 / R1).